The chain runs to 504 residues: Cytochrome P450 4A2 (504 aa).

Residues 1 to 4 (MGFS) constitute a propeptide that is removed on maturation. Position 315 (Glu-315) interacts with heme. A Phosphoserine modification is found at Ser-434. Cys-451 serves as a coordination point for heme.

Belongs to the cytochrome P450 family. Requires heme as cofactor.

Its subcellular location is the endoplasmic reticulum membrane. It localises to the microsome membrane. It carries out the reaction an omega-methyl-long-chain fatty acid + reduced [NADPH--hemoprotein reductase] + O2 = an omega-hydroxy-long-chain fatty acid + oxidized [NADPH--hemoprotein reductase] + H2O + H(+). The enzyme catalyses dodecanoate + reduced [NADPH--hemoprotein reductase] + O2 = (11R)-hydroxydodecanoate + oxidized [NADPH--hemoprotein reductase] + H2O + H(+). The catalysed reaction is dodecanoate + reduced [NADPH--hemoprotein reductase] + O2 = 12-hydroxydodecanoate + oxidized [NADPH--hemoprotein reductase] + H2O + H(+). It catalyses the reaction tetradecanoate + reduced [NADPH--hemoprotein reductase] + O2 = 14-hydroxytetradecanoate + oxidized [NADPH--hemoprotein reductase] + H2O + H(+). It carries out the reaction hexadecanoate + reduced [NADPH--hemoprotein reductase] + O2 = 16-hydroxyhexadecanoate + oxidized [NADPH--hemoprotein reductase] + H2O + H(+). It functions in the pathway lipid metabolism; fatty acid metabolism. In terms of biological role, a cytochrome P450 monooxygenase that catalyzes omega and omega-1 hydroxylation of saturated fatty acids. Exhibits preferential omega versus omega-1 regioselectivity and (R) versus (S) stereoselectivity for hydroxylation of lauric and myristic acids. Has low activity toward palmitic acid. Mechanistically, uses molecular oxygen inserting one oxygen atom into a substrate, and reducing the second into a water molecule, with two electrons provided by NADPH via cytochrome P450 reductase (CPR; NADPH-ferrihemoprotein reductase). The chain is Cytochrome P450 4A2 from Rattus norvegicus (Rat).